Reading from the N-terminus, the 253-residue chain is DNA polymerase sliding clamp (253 aa).

This sequence belongs to the PCNA family. In terms of assembly, homotrimer. The subunits circularize to form a toroid; DNA passes through its center. Replication factor C (RFC) is required to load the toroid on the DNA.

Sliding clamp subunit that acts as a moving platform for DNA processing. Responsible for tethering the catalytic subunit of DNA polymerase and other proteins to DNA during high-speed replication. This chain is DNA polymerase sliding clamp, found in Methanopyrus kandleri (strain AV19 / DSM 6324 / JCM 9639 / NBRC 100938).